A 458-amino-acid polypeptide reads, in one-letter code: Sushi repeat-containing protein SRPX2 (458 aa).

The N-terminal stretch at 1 to 18 (MEASITVLLFAFTKVASS) is a signal peptide. Sushi domains follow at residues 62 to 112 (ATCY…HCRR), 113 to 171 (IQCH…VCVD), and 255 to 314 (RRCP…TCTP). Cystine bridges form between Cys-64/Cys-98, Cys-84/Cys-110, Cys-115/Cys-156, and Cys-142/Cys-169. Residues 170 to 254 (VDLDPPKIQC…SCKFIVKVQV (85 aa)) form the HYR domain. 2 disulfides stabilise this stretch: Cys-257–Cys-299 and Cys-285–Cys-312.

Forms homooligomers.

The protein localises to the secreted. Its subcellular location is the cytoplasm. The protein resides in the cell surface. It localises to the synapse. May play a role in angiogenesis, synapse formation, cellular migration and adhesion. This Xenopus laevis (African clawed frog) protein is Sushi repeat-containing protein SRPX2 (srpx2).